Here is a 294-residue protein sequence, read N- to C-terminus: N-acetylmuramic acid 6-phosphate etherase (294 aa).

In terms of domain architecture, SIS spans 54–217; that stretch reads VIQSFEEEGR…STASMIGVGK (164 aa). The active-site Proton donor is glutamate 82. The active site involves glutamate 113.

It belongs to the GCKR-like family. MurNAc-6-P etherase subfamily. Homodimer.

The enzyme catalyses N-acetyl-D-muramate 6-phosphate + H2O = N-acetyl-D-glucosamine 6-phosphate + (R)-lactate. The protein operates within amino-sugar metabolism; N-acetylmuramate degradation. Its function is as follows. Specifically catalyzes the cleavage of the D-lactyl ether substituent of MurNAc 6-phosphate, producing GlcNAc 6-phosphate and D-lactate. This chain is N-acetylmuramic acid 6-phosphate etherase, found in Bacillus anthracis (strain A0248).